The sequence spans 167 residues: Endoribonuclease YbeY (167 aa).

3 residues coordinate Zn(2+): His131, His135, and His141.

This sequence belongs to the endoribonuclease YbeY family. It depends on Zn(2+) as a cofactor.

It is found in the cytoplasm. Functionally, single strand-specific metallo-endoribonuclease involved in late-stage 70S ribosome quality control and in maturation of the 3' terminus of the 16S rRNA. The polypeptide is Endoribonuclease YbeY (Rickettsia felis (strain ATCC VR-1525 / URRWXCal2) (Rickettsia azadi)).